A 290-amino-acid chain; its full sequence is Signal peptidase I (290 aa).

Topologically, residues 1–13 are cytoplasmic; the sequence is MKFLRSVYAFCSS. Residues 14–34 form a helical membrane-spanning segment; it reads WVGTIIIVLLVIFFIAQAFII. Topologically, residues 35-290 are extracellular; sequence PSRSMVGTLY…KIIKKEKATH (256 aa). Active-site residues include Ser-38 and Lys-106.

This sequence belongs to the peptidase S26 family.

Its subcellular location is the cell membrane. The enzyme catalyses Cleavage of hydrophobic, N-terminal signal or leader sequences from secreted and periplasmic proteins.. The chain is Signal peptidase I (lepB) from Helicobacter pylori (strain J99 / ATCC 700824) (Campylobacter pylori J99).